Consider the following 843-residue polypeptide: F-box only protein 11 (843 aa).

Residues 1–63 form a disordered region; the sequence is MVAEESGPGA…RVSGKSQDLS (63 aa). A compositionally biased stretch (polar residues) spans 30 to 45; it reads PTKNSMEGASTSTTEN. The F-box domain occupies 69 to 115; it reads QYLQEKLPDEVVLKIFSYLLEQDLCRAACVCKRFSELANDPILWKRL. PbH1 repeat units lie at residues 311–333, 334–356, 357–379, 380–402, 403–425, 426–448, 449–471, 472–494, 495–517, 518–540, 541–563, 564–586, 587–609, 610–632, 633–655, 656–678, 679–701, 702–724, and 725–746; these read GACP…YITD, HAQG…WVKN, HGNP…FTFD, HGMG…EVKA, YANP…YVHE, KGRG…WITS, NSDP…YIFG, DGRG…QIRT, NSCP…YVHE, KGQG…WVTT, GSTP…YFYD, NGHG…QIRT, GSNP…LVYN, SGLG…WIKT, DSNP…CIFN, GGRG…LIST, NSHP…EITN, HATA…FLAS, and GVNV…EKAV. The UBR-type zinc finger occupies 749–820; that stretch reads GQCLYKISSY…LSNPCTLAGE (72 aa).

As to quaternary structure, component of the SCF(FBXO11) complex consisting of CUL1, RBX1, SKP1 and FBXO11. Interacts with CIITA.

The protein resides in the nucleus. Its subcellular location is the chromosome. Its pathway is protein modification; protein ubiquitination. Functionally, substrate recognition component of a SCF (SKP1-CUL1-F-box protein) E3 ubiquitin-protein ligase complex which mediates the ubiquitination and subsequent proteasomal degradation of target proteins, such as DTL/CDT2, BCL6, SNAI1 and PRDM1/BLIMP1. The SCF(FBXO11) complex mediates ubiquitination and degradation of BCL6, thereby playing a role in the germinal center B-cells terminal differentiation toward memory B-cells and plasma cells. The SCF(FBXO11) complex also mediates ubiquitination and degradation of DTL, an important step for the regulation of TGF-beta signaling, cell migration and the timing of the cell-cycle progression and exit. The SCF(FBXO11) complex also catalyzes ubiquitination and degradation of GSK3B-phosphorylated SNAI1. Binds to and neddylates phosphorylated p53/TP53, inhibiting its transcriptional activity. Plays a role in the regulatiom of erythropoiesis but not myelopoiesis or megakaryopoiesis. Mechanistically, activates erythroid genes by mediating the degradation of BAHD1, a heterochromatin-associated protein that recruits corepressors to H3K27me3 marks. Participates in macrophage cell death and inflammation in response to bacterial toxins by regulating the expression of complement 5a receptor 1/C5AR1 and IL-1beta. Acts as a critical regulator to determine the level of MHC-II by mediating the recognition of degron at the P/S/T domain of CIITA leading to its ubiquitination and subsequent degradation via the proteasome. Participates in the antiviral repsonse by initiating the activation of TBK1-IRF3-IFN-I axis. Mediates the 'Lys-63'-linked ubiquitination of TRAF3 to strengthen the interaction between TRAF3 and TBK1. The protein is F-box only protein 11 (Fbxo11) of Rattus norvegicus (Rat).